Consider the following 367-residue polypeptide: Inhibin alpha chain (367 aa).

The signal sequence occupies residues 1-20 (MVPPLPLLLLLLLVPQGGHG). Positions 21–63 (CQGSELDREIVLAKVRALFLDALGPPAVTGEGGDPGVRRLPRR) are excised as a propeptide. A propeptide spans 64–233 (HALGGFARRG…PPSGGERTRR (170 aa)) (inhibin alpha N-terminal region). 2 N-linked (GlcNAc...) asparagine glycosylation sites follow: Asn-147 and Asn-269. Disulfide bonds link Cys-263–Cys-329, Cys-292–Cys-364, and Cys-296–Cys-366.

The protein belongs to the TGF-beta family. Dimeric, linked by one or more disulfide bonds. Activin B is a dimer of alpha and beta-B. Inhibin A is a dimer of alpha and beta-A. Inhibin B is a dimer of alpha and beta-B. Interacts with TGFBR3L; this interaction regulates female fertility. Post-translationally, proteolytic processing yields a number of bioactive forms, consisting either solely of the mature alpha chain, of the most N-terminal propeptide linked through a disulfide bond to the mature alpha chain, or of the entire proprotein.

The protein resides in the secreted. Inhibins and activins inhibit and activate, respectively, the secretion of follitropin by the pituitary gland. Inhibins/activins are involved in regulating a number of diverse functions such as hypothalamic and pituitary hormone secretion, gonadal hormone secretion, germ cell development and maturation, erythroid differentiation, insulin secretion, nerve cell survival, embryonic axial development or bone growth, depending on their subunit composition. Inhibins appear to oppose the functions of activins. Functionally, inhibin A is a dimer of alpha/INHA and beta-A/INHBA that functions as a feedback regulator in the hypothalamic-pituitary-gonadal (HPG) axis. Inhibits the secretion of FSH from the anterior pituitary gland by acting on pituitary gonadotrope cells. Antagonizes activin A by binding to the proteoglycan, betaglycan, and forming a stable complex with and, thereby, sequestering type II activin receptors while excluding type I receptor. Its function is as follows. Inhibin B is a dimer of alpha and beta-B that plays a crucial role in the regulation of the reproductive system by inhibiting the secretion of follicle-stimulating hormone (FSH) from the anterior pituitary gland. Thereby, maintains reproductive homeostasis in both males and females. Acts as a more potent suppressor of FSH release than inhibin A. Functions as competitive receptor antagonist binding activin type II receptors with high affinity in the presence of the TGF-beta type III coreceptor/TGFBR3L. The polypeptide is Inhibin alpha chain (INHA) (Equus caballus (Horse)).